A 368-amino-acid chain; its full sequence is Acetyl-coenzyme A carboxylase carboxyl transferase subunit alpha (368 aa).

In terms of domain architecture, CoA carboxyltransferase C-terminal spans 44 to 294 (EIDNKLQEIY…RKSIEKNLNE (251 aa)).

It belongs to the AccA family. Acetyl-CoA carboxylase is a heterohexamer composed of biotin carboxyl carrier protein (AccB), biotin carboxylase (AccC) and two subunits each of ACCase subunit alpha (AccA) and ACCase subunit beta (AccD).

It localises to the cytoplasm. The enzyme catalyses N(6)-carboxybiotinyl-L-lysyl-[protein] + acetyl-CoA = N(6)-biotinyl-L-lysyl-[protein] + malonyl-CoA. Its pathway is lipid metabolism; malonyl-CoA biosynthesis; malonyl-CoA from acetyl-CoA: step 1/1. Functionally, component of the acetyl coenzyme A carboxylase (ACC) complex. First, biotin carboxylase catalyzes the carboxylation of biotin on its carrier protein (BCCP) and then the CO(2) group is transferred by the carboxyltransferase to acetyl-CoA to form malonyl-CoA. The sequence is that of Acetyl-coenzyme A carboxylase carboxyl transferase subunit alpha from Pelagibacter ubique (strain HTCC1062).